A 270-amino-acid polypeptide reads, in one-letter code: MEILVCVKQVPDTAEVKIDPVKHTVIRAGVPNIFNPFDQNALEAALALKDADKDVKITLLSMGPDQAKDVLREGLAMGADDAYLLSDRKLGGSDTLATGYALAQAIKKLAADKGIEQFDIILCGKQAIDGDTAQVGPQIACELGIPQITYARDIKVEGDKVTVQQENEEGYIVTEAQFPVLITAVKDLNEPRFPTIRGTMKAKRREIPNLDAAAVAADDAQIGLSGSPTKVRKIFTPPQRSGGLVLKVEDDNEQAIVDQVMEKLVAQKII.

Belongs to the ETF alpha-subunit/FixB family. In terms of assembly, heterodimer of an alpha and a beta subunit. FAD is required as a cofactor.

Functionally, the electron transfer flavoprotein serves as a specific electron acceptor for other dehydrogenases. It transfers the electrons to the main respiratory chain via ETF-ubiquinone oxidoreductase (ETF dehydrogenase). This Megasphaera elsdenii protein is Electron transfer flavoprotein subunit beta (etfB).